The following is a 260-amino-acid chain: Metallo-beta-lactamase domain-containing protein 1 (260 aa).

Zn(2+) contacts are provided by H118, H120, D122, H123, H173, D196, and H235.

This sequence belongs to the metallo-beta-lactamase superfamily. Glyoxalase II family. As to quaternary structure, homodimer. Requires Zn(2+) as cofactor.

It localises to the cytoplasm. It is found in the cytosol. The protein localises to the nucleus. It catalyses the reaction a ribonucleotidyl-ribonucleotide-RNA + H2O = a 3'-end ribonucleotide-RNA + a 5'-end 5'-phospho-ribonucleoside-RNA + H(+). Endoribonuclease that catalyzes the hydrolysis of histone-coding pre-mRNA 3'-end. Involved in histone pre-mRNA processing during the S-phase of the cell cycle, which is required for entering/progressing through S-phase. Cleaves histone pre-mRNA at a major and a minor cleavage site after the 5'-ACCCA-3' and the 5'-ACCCACA-3' sequence, respectively, and located downstream of the stem-loop. May require the presence of the HDE element located at the histone pre-RNA 3'-end to avoid non-specific cleavage. This chain is Metallo-beta-lactamase domain-containing protein 1, found in Mus musculus (Mouse).